The sequence spans 422 residues: Putative polyketide beta-ketoacyl synthase 1 (422 aa).

A Ketosynthase family 3 (KS3) domain is found at 2-416; sequence TRRVAVTGIG…GFQSAVLLTG (415 aa). Active-site for beta-ketoacyl synthase activity residues include Cys169, His309, and His346.

Belongs to the thiolase-like superfamily. Beta-ketoacyl-ACP synthases family.

The protein operates within antibiotic biosynthesis; curamycin biosynthesis. This is Putative polyketide beta-ketoacyl synthase 1 (curA) from Streptomyces cyaneus (Streptomyces curacoi).